The chain runs to 291 residues: Probable cell wall amidase LytH (291 aa).

The signal sequence occupies residues 1–40; it reads MKKIEAWLSKKGLKNKRTLIVVIAFVLFIIFLFLLLNSNS. Residues 41 to 105 form the SH3b domain; sequence EDSGNITITE…WIAGWHTNLD (65 aa). A disordered region spans residues 118–140; it reads QGKTIVLDPGHGGSDQGASSNTK. The MurNAc-LAA domain maps to 122–286; it reads IVLDPGHGGS…LEQAIVDGLK (165 aa).

It belongs to the N-acetylmuramoyl-L-alanine amidase 3 family.

The protein localises to the secreted. Functionally, probably involved in cell-wall metabolism. This Staphylococcus aureus (strain USA300) protein is Probable cell wall amidase LytH (lytH).